We begin with the raw amino-acid sequence, 203 residues long: Enterotoxin-like toxin X (203 aa).

Positions 164–180 (YTLESHKELQKNRENVE) are sialic acid-binding motif.

The protein belongs to the staphylococcal/streptococcal toxin family.

The protein resides in the secreted. Its function is as follows. Plays a role in the inhibition of the host innate immune system. Inhibits phagocytosis and killing by human neutrophils by interacting with multiple neutrophil surface glycoproteins in a sialic acid-dependent manner. In Staphylococcus aureus, this protein is Enterotoxin-like toxin X.